We begin with the raw amino-acid sequence, 36 residues long: Pancreatic polypeptide (36 aa).

A Phenylalanine amide modification is found at Phe36.

This sequence belongs to the NPY family.

The protein localises to the secreted. In terms of biological role, hormone secreted by pancreatic cells that acts as a regulator of pancreatic and gastrointestinal functions. The chain is Pancreatic polypeptide (ppy) from Aquarana catesbeiana (American bullfrog).